Reading from the N-terminus, the 287-residue chain is Transmembrane protein 163 (287 aa).

Residues Met1–Glu63 are disordered. Topologically, residues Met1–Ala86 are cytoplasmic. A phosphoserine mark is found at Ser11, Ser53, Ser55, and Ser59. Residues Glu40 to Ser70 are required for interaction with MCOLN1. The helical transmembrane segment at Leu87 to Val107 threads the bilayer. Residues Ser108 to Ala114 are Extracellular-facing. A helical transmembrane segment spans residues Ser115–Trp135. The Cytoplasmic portion of the chain corresponds to Arg136–Arg148. A helical transmembrane segment spans residues Glu149–Val169. The Extracellular portion of the chain corresponds to Lys170–Asp185. The helical transmembrane segment at Phe186 to Phe206 threads the bilayer. The Cytoplasmic portion of the chain corresponds to Met207 to Arg215. Residues Ala216–Leu236 traverse the membrane as a helical segment. Residues Ser237–Ser253 lie on the Extracellular side of the membrane. Residues Ile254–Val274 form a helical membrane-spanning segment. The Cytoplasmic segment spans residues Pro275 to Glu287.

Belongs to the TMEM163 family. Homodimer. Interacts with MCOLN1/TRPML1. Interacts with SLC30A1, SLC30A2, SLC30A3 and SLC30A4.

The protein localises to the cytoplasmic vesicle. It is found in the secretory vesicle. It localises to the synaptic vesicle membrane. The protein resides in the early endosome membrane. Its subcellular location is the late endosome membrane. The protein localises to the lysosome membrane. It is found in the cell membrane. The catalysed reaction is Zn(2+)(in) = Zn(2+)(out). Zinc ion transporter that mediates zinc efflux and plays a crucial role in intracellular zinc homeostasis. Binds the divalent cations Zn(2+), Ni(2+), and to a minor extent Cu(2+). Is a functional modulator of P2X purinoceptors, including P2RX1, P2RX3, P2RX4 and P2RX7. Plays a role in central nervous system development and is required for myelination, and survival and proliferation of oligodendrocytes. In Bos taurus (Bovine), this protein is Transmembrane protein 163 (TMEM163).